Here is a 750-residue protein sequence, read N- to C-terminus: Dual specificity tyrosine-phosphorylation-regulated kinase 1A (750 aa).

2 disordered regions span residues 56–81 (ALPY…RDPA) and 104–129 (YAKK…KVYN). The short motif at 109–126 (RRHQQGQGDDSSHKKERK) is the Bipartite nuclear localization signal element. The 321-residue stretch at 151 to 471 (YEIDSLIGKG…PYYALQHSFF (321 aa)) folds into the Protein kinase domain. Residues 157-165 (IGKGSFGQV), lysine 180, and 230-233 (FEML) each bind ATP. The active-site Proton acceptor is aspartate 279. Disordered stretches follow at residues 400-434 (TKDG…AGES), 477-531 (EGTN…RHSG), 583-666 (SQKN…GNQA), and 731-750 (DRED…VASS). Residues 477–493 (EGTNTSNSVSTSPAMEQ) are compositionally biased toward polar residues. Positions 494-517 (SQSSGTTSSTSSSSGGSSGTSNSG) are enriched in low complexity. The tract at residues 584 to 612 (QKNVPHHHGNGSHHHHHHHHHHHGQHILS) is histidine-rich domain (HRD). Over residues 587–608 (VPHHHGNGSHHHHHHHHHHHGQ) the composition is skewed to basic residues. Residues 610–621 (ILSNRTRTRIYN) are compositionally biased toward polar residues. Residues 622–659 (SPSTSSSTQDSMDIGNSHHSMTSLSSSTTSSSTSSSST) are compositionally biased toward low complexity. The segment covering 741–750 (CVQQSPVASS) has biased composition (polar residues).

The protein belongs to the protein kinase superfamily. CMGC Ser/Thr protein kinase family. MNB/DYRK subfamily. Post-translationally, autophosphorylated on tyrosine residues.

Its subcellular location is the nucleus. The protein localises to the nucleus speckle. The catalysed reaction is L-seryl-[protein] + ATP = O-phospho-L-seryl-[protein] + ADP + H(+). The enzyme catalyses L-threonyl-[protein] + ATP = O-phospho-L-threonyl-[protein] + ADP + H(+). It carries out the reaction L-tyrosyl-[protein] + ATP = O-phospho-L-tyrosyl-[protein] + ADP + H(+). It catalyses the reaction [DNA-directed RNA polymerase] + ATP = phospho-[DNA-directed RNA polymerase] + ADP + H(+). In terms of biological role, dual-specificity kinase which possesses both serine/threonine and tyrosine kinase activities. Exhibits a substrate preference for proline at position P+1 and arginine at position P-3. Plays an important role in double-strand breaks (DSBs) repair following DNA damage. Mechanistically, phosphorylates RNF169 and increases its ability to block accumulation of TP53BP1 at the DSB sites thereby promoting homologous recombination repair (HRR). Also acts as a positive regulator of transcription by acting as a CTD kinase that mediates phosphorylation of the CTD (C-terminal domain) of the large subunit of RNA polymerase II (RNAP II) POLR2A. Modulates alternative splicing by phosphorylating the splice factor SRSF6. Phosphorylates SEPTIN4, SEPTIN5 and SF3B1. This is Dual specificity tyrosine-phosphorylation-regulated kinase 1A from Xenopus laevis (African clawed frog).